The following is a 322-amino-acid chain: Ornithine carbamoyltransferase (322 aa).

Carbamoyl phosphate is bound by residues 67-70 (STRT), Gln-94, Arg-118, and 145-148 (HPCQ). L-ornithine-binding positions include Asn-176, Asp-240, and 244–245 (SM). Carbamoyl phosphate contacts are provided by residues 280 to 281 (CL) and Arg-308.

It belongs to the aspartate/ornithine carbamoyltransferase superfamily. OTCase family.

Its subcellular location is the cytoplasm. The enzyme catalyses carbamoyl phosphate + L-ornithine = L-citrulline + phosphate + H(+). Its pathway is amino-acid biosynthesis; L-arginine biosynthesis; L-arginine from L-ornithine and carbamoyl phosphate: step 1/3. Functionally, reversibly catalyzes the transfer of the carbamoyl group from carbamoyl phosphate (CP) to the N(epsilon) atom of ornithine (ORN) to produce L-citrulline. The chain is Ornithine carbamoyltransferase from Oceanobacillus iheyensis (strain DSM 14371 / CIP 107618 / JCM 11309 / KCTC 3954 / HTE831).